The following is a 233-amino-acid chain: Large ribosomal subunit protein uL2 (233 aa).

The interval 195–233 (PHGGGNHQHVGRPSTVGRNAPPGRKVGRLSPKRRRVNGR) is disordered. Positions 219-233 (KVGRLSPKRRRVNGR) are enriched in basic residues.

This sequence belongs to the universal ribosomal protein uL2 family. In terms of assembly, part of the 50S ribosomal subunit. Forms a bridge to the 30S subunit in the 70S ribosome.

Its function is as follows. One of the primary rRNA binding proteins. Required for association of the 30S and 50S subunits to form the 70S ribosome, for tRNA binding and peptide bond formation. It has been suggested to have peptidyltransferase activity; this is somewhat controversial. Makes several contacts with the 16S rRNA in the 70S ribosome. The sequence is that of Large ribosomal subunit protein uL2 from Thermoplasma acidophilum (strain ATCC 25905 / DSM 1728 / JCM 9062 / NBRC 15155 / AMRC-C165).